The primary structure comprises 345 residues: Fibronectin type 3 and ankyrin repeat domains protein 1 (345 aa).

The 101-residue stretch at 8–108 folds into the Fibronectin type-III domain; the sequence is PPSKPHPPVV…LVSVSTTREP (101 aa). 6 ANK repeats span residues 109-139, 143-172, 176-205, 209-238, 243-273, and 277-306; these read ISSEHLHRAVSVNDEDLLVRILQGGRVKVDV, FGFTALMVAAQKGYTRLVKILVSNGTDVNL, SGKDSLMLACYAGHLDVVKYLRRHGASWQA, GGCTALHWAADGGHCSVIEWMIKDGCEVDV, SGWTPLMRVSAVSGNQRVASLLIDAGANVNV, and NGKTPLMVAVLNNHEELVQLLLDKGADASV.

In terms of assembly, interacts with COPS5; regulates the phosphorylation of JUN and the transcriptional activity of AP-1. Interacts with RYBP; may prevent the ubiquitin-mediated proteasomal degradation of FANK1. Polyubiquitinated. Polyubiquitination leads to proteasomal degradation. In terms of tissue distribution, mostly restricted to testis.

It is found in the nucleus. The protein resides in the cytoplasm. The protein localises to the cytosol. It localises to the cytoskeleton. Its subcellular location is the cilium basal body. It is found in the cell projection. The protein resides in the cilium. Its function is as follows. Through the activation of JUN and AP-1-mediated transcription, may regulate apoptosis. The polypeptide is Fibronectin type 3 and ankyrin repeat domains protein 1 (Homo sapiens (Human)).